The sequence spans 274 residues: MGIRKLKPVTPGQRHRIVGMFSEITATIPEKSLVFGKCKSGGRNAEGHRTVRHIGGGHKRRFRLIDFKRNKDGIPARVKSIEYDPNRSARIALLYYADGEKVYIVAPNGLKVNQLIVSGKEAPPEVGNSLPLADIPLGTIIHNIELRPGQGAKMVRSAGVFAQVVSREGNYVIVRMPSGETRKVLALCRASIGSVSNSEHALEKSGKAGRIRWLGHCPHVRGVAMNPVDHPMGGGEGRASGGHPRSRKGLYAKGLKTRNLKKYSSRYIIESKKK.

The interval 228-254 (VDHPMGGGEGRASGGHPRSRKGLYAKG) is disordered. Residues 244–254 (PRSRKGLYAKG) are compositionally biased toward basic residues.

This sequence belongs to the universal ribosomal protein uL2 family. Part of the 50S ribosomal subunit. Forms a bridge to the 30S subunit in the 70S ribosome.

Its function is as follows. One of the primary rRNA binding proteins. Required for association of the 30S and 50S subunits to form the 70S ribosome, for tRNA binding and peptide bond formation. It has been suggested to have peptidyltransferase activity; this is somewhat controversial. Makes several contacts with the 16S rRNA in the 70S ribosome. In Azobacteroides pseudotrichonymphae genomovar. CFP2, this protein is Large ribosomal subunit protein uL2.